A 1349-amino-acid chain; its full sequence is Protein turtle homolog B (1349 aa).

The first 20 residues, 1-20 (MIWYVATFIASVIGTRGLAA), serve as a signal peptide directing secretion. The Extracellular segment spans residues 21–722 (EGAHGLREEP…DLTEDGLARP (702 aa)). 5 consecutive Ig-like domains span residues 24–129 (HGLR…HNGS), 139–226 (PTFT…LLVQ), 228–320 (PPFI…AYLT), 324–415 (PARV…ARLV), and 420–504 (PYFT…THLT). 2 disulfide bridges follow: cysteine 45/cysteine 113 and cysteine 161/cysteine 208. N-linked (GlcNAc...) asparagine glycosylation is found at asparagine 241 and asparagine 258. Cystine bridges form between cysteine 250-cysteine 303, cysteine 346-cysteine 397, and cysteine 442-cysteine 488. 2 Fibronectin type-III domains span residues 512–604 (APGS…TLAF) and 614–708 (LVTP…STDI). A glycan (N-linked (GlcNAc...) asparagine) is linked at asparagine 624. Residues 723-743 (VLAGIVATICFLAAAILFSTL) traverse the membrane as a helical segment. At 744–1349 (AACFVNKQRK…SPPERALSKL (606 aa)) the chain is on the cytoplasmic side. 3 disordered regions span residues 758-817 (RKKD…EKEL), 911-1081 (QLTP…RGLP), and 1099-1349 (APKG…LSKL). Residues serine 775, serine 783, and serine 794 each carry the phosphoserine modification. Over residues 911 to 921 (QLTPLSSSQES) the composition is skewed to polar residues. Residues 985–998 (VPEVGSPLSSVMSS) show a composition bias toward low complexity. Composition is skewed to polar residues over residues 1018 to 1033 (ENAS…TPTG), 1129 to 1141 (LVSQ…TSQG), and 1199 to 1214 (SRLS…SRTG). Residue arginine 1136 is modified to Omega-N-methylarginine. A phosphoserine mark is found at serine 1207 and serine 1215. The segment covering 1251–1271 (STPSTGSPSQSSRSGSPSYRP) has biased composition (low complexity). A compositionally biased stretch (pro residues) spans 1283–1292 (PSPPPGPAPA).

This sequence belongs to the immunoglobulin superfamily. Turtle family. As to quaternary structure, found in a complex with MAGI2 and NLGN2, where it interacts with MAGI2 (via PDZ 5 and PDZ 6 domains). N-glycosylated and sialylated. Not significantly O-glycosylated.

It is found in the postsynaptic cell membrane. The protein localises to the postsynaptic density. Its function is as follows. Transmembrane protein which is abundantly expressed in interneurons, where it may regulate inhibitory synapse development. May mediate homophilic cell adhesion. This is Protein turtle homolog B (IGSF9B) from Homo sapiens (Human).